We begin with the raw amino-acid sequence, 913 residues long: MTDPHTTTLPTQFDPTGIEPKWAARWRSEPFRADATSGKDPFTIVIPPPNVTGNLHLGHALDNTLIDTLIRYKRMAGFEALYLPGMDHAGISTQVVVERQLKDAGTSRHDLGREAFLEKVWEWKGKSGGMILDQLTRLGVSADWTRERFTMDEGLSRAVRTQFVKLYHDGLAYRGERIVNWDPASQTTLSELEIDREVRKGKMYTLSYKLENSAERGSNGETGEIRIATVRPETIFADQAIAVHPEDERFRHLVGQKARIPLTDRWVPIIADEAVEMEFGVGALKITPAHDPTDFEVGERHGLERPSVIDLDGNLTRDELVPAEFQGLERFAARKAVVKALEESGDLLEQKDHDTAIGLSERTKVPVEPIISEQWFVKMKPFADQVLEGLDKGEIKLVPERYTKVNRDWLENIRDWNISRQLWWGHQIPAWYDKEGNIYVPDPENPELDCDQDPRYAHLNLRRDPDVFDTWFSSNLWPFSTLGWPDTDSEDFRKFYPTQVLVTGYDILFFWVARMQMAGYGLTGQAPFSTVMLHGLYLDAKGQKMSKSKGNGIDPLELFGQYGVDACRFAFTFLSTGGQDIKHDARRFEQGRNFANKLWNATRFALMRLGEARIEGSDDLSAYVRAAVTLPDGVLLRSKDVLAQLKERDDLTLADRWIISRLNDVTAEASAQLDAFDIGAAIRTLYSFTWDEFCDWYIEAAKPELASGNLGTMATLKVVLEHVLKLLHPFMPFITSELYAALGHRRQIAVHSWPQPDAALHDAEATKAFDALRSAVDSARSLKSELGLSPQDRLNVAVDGDLADVVRQNARVVEGIARVNLVPALEGRTLSQVAPGVTILAPLEGTVDIADWVKKQQKRLAELDKQIKQAQGKLNNEGFVARAPAEVIEEEKRRVADFGAQKERLEGVLAQLG.

A 'HIGH' region motif is present at residues 49 to 59 (PNVTGNLHLGH). A 'KMSKS' region motif is present at residues 544–548 (KMSKS). K547 is an ATP binding site. Positions 851 to 912 (DWVKKQQKRL…ERLEGVLAQL (62 aa)) form a coiled coil.

It belongs to the class-I aminoacyl-tRNA synthetase family. ValS type 1 subfamily. In terms of assembly, monomer.

It is found in the cytoplasm. The enzyme catalyses tRNA(Val) + L-valine + ATP = L-valyl-tRNA(Val) + AMP + diphosphate. Catalyzes the attachment of valine to tRNA(Val). As ValRS can inadvertently accommodate and process structurally similar amino acids such as threonine, to avoid such errors, it has a 'posttransfer' editing activity that hydrolyzes mischarged Thr-tRNA(Val) in a tRNA-dependent manner. This chain is Valine--tRNA ligase, found in Deinococcus radiodurans (strain ATCC 13939 / DSM 20539 / JCM 16871 / CCUG 27074 / LMG 4051 / NBRC 15346 / NCIMB 9279 / VKM B-1422 / R1).